A 194-amino-acid chain; its full sequence is ATP-dependent Clp protease proteolytic subunit (194 aa).

S97 acts as the Nucleophile in catalysis. The active site involves H122.

It belongs to the peptidase S14 family. Fourteen ClpP subunits assemble into 2 heptameric rings which stack back to back to give a disk-like structure with a central cavity, resembling the structure of eukaryotic proteasomes.

The protein localises to the cytoplasm. It carries out the reaction Hydrolysis of proteins to small peptides in the presence of ATP and magnesium. alpha-casein is the usual test substrate. In the absence of ATP, only oligopeptides shorter than five residues are hydrolyzed (such as succinyl-Leu-Tyr-|-NHMec, and Leu-Tyr-Leu-|-Tyr-Trp, in which cleavage of the -Tyr-|-Leu- and -Tyr-|-Trp bonds also occurs).. Cleaves peptides in various proteins in a process that requires ATP hydrolysis. Has a chymotrypsin-like activity. Plays a major role in the degradation of misfolded proteins. This Campylobacter jejuni subsp. jejuni serotype O:23/36 (strain 81-176) protein is ATP-dependent Clp protease proteolytic subunit.